The chain runs to 94 residues: Large ribosomal subunit protein uL23 (94 aa).

This sequence belongs to the universal ribosomal protein uL23 family. Part of the 50S ribosomal subunit. Contacts protein L29, and trigger factor when it is bound to the ribosome.

One of the early assembly proteins it binds 23S rRNA. One of the proteins that surrounds the polypeptide exit tunnel on the outside of the ribosome. Forms the main docking site for trigger factor binding to the ribosome. This Phytoplasma australiense protein is Large ribosomal subunit protein uL23.